Reading from the N-terminus, the 178-residue chain is Peptide deformylase (178 aa).

Fe cation is bound by residues C96 and H138. The active site involves E139. H142 contacts Fe cation.

It belongs to the polypeptide deformylase family. Fe(2+) serves as cofactor.

The enzyme catalyses N-terminal N-formyl-L-methionyl-[peptide] + H2O = N-terminal L-methionyl-[peptide] + formate. In terms of biological role, removes the formyl group from the N-terminal Met of newly synthesized proteins. Requires at least a dipeptide for an efficient rate of reaction. N-terminal L-methionine is a prerequisite for activity but the enzyme has broad specificity at other positions. The protein is Peptide deformylase of Bartonella tribocorum (strain CIP 105476 / IBS 506).